The chain runs to 339 residues: MPKQKVAILGPGSWGTALAQVLNDNGHEVRLWGNIPEQINEINTRHTNSHYFKDIVLDEAIKATLDLKEALADIDAILFVVPTKVTRLVAKQVAQVLDHKAIVMHASKGLEPGTHERLSTILEEEIPAQLRSEVVVVSGPSHAEETIVRDITLITAASKDITAARYVQTLFSNHYFRLYTNTDVIGVETAGALKNIIAVGAGALHGLGYGDNAKAAVITRGLAEITRLGVKLGADPLTYSGLSGVGDLIVTGTSVHSRNWRAGAALGRGEKLKDIENNMGMVIEGISTTKVAYEIAQELGVYMPITSAIYKSIYEGADIKESILGMMSNEFRSENEWHT.

The NADPH site is built by serine 13, tryptophan 14, and lysine 108. Sn-glycerol 3-phosphate is bound by residues lysine 108, glycine 139, and serine 141. Position 143 (alanine 143) interacts with NADPH. Sn-glycerol 3-phosphate-binding residues include lysine 194, aspartate 247, serine 257, arginine 258, and asparagine 259. Lysine 194 acts as the Proton acceptor in catalysis. Residue arginine 258 coordinates NADPH. The NADPH site is built by valine 282 and glutamate 284.

This sequence belongs to the NAD-dependent glycerol-3-phosphate dehydrogenase family.

The protein localises to the cytoplasm. The catalysed reaction is sn-glycerol 3-phosphate + NAD(+) = dihydroxyacetone phosphate + NADH + H(+). It catalyses the reaction sn-glycerol 3-phosphate + NADP(+) = dihydroxyacetone phosphate + NADPH + H(+). It functions in the pathway membrane lipid metabolism; glycerophospholipid metabolism. Its function is as follows. Catalyzes the reduction of the glycolytic intermediate dihydroxyacetone phosphate (DHAP) to sn-glycerol 3-phosphate (G3P), the key precursor for phospholipid synthesis. In Streptococcus equi subsp. equi (strain 4047), this protein is Glycerol-3-phosphate dehydrogenase [NAD(P)+].